The primary structure comprises 545 residues: Chaperonin GroEL (545 aa).

Residues 29–32 (TMGP), lysine 50, 86–90 (DGTTT), glycine 414, 477–479 (NAA), and aspartate 493 contribute to the ATP site.

It belongs to the chaperonin (HSP60) family. Forms a cylinder of 14 subunits composed of two heptameric rings stacked back-to-back. Interacts with the co-chaperonin GroES.

It is found in the cytoplasm. It catalyses the reaction ATP + H2O + a folded polypeptide = ADP + phosphate + an unfolded polypeptide.. Functionally, together with its co-chaperonin GroES, plays an essential role in assisting protein folding. The GroEL-GroES system forms a nano-cage that allows encapsulation of the non-native substrate proteins and provides a physical environment optimized to promote and accelerate protein folding. This chain is Chaperonin GroEL, found in Campylobacter fetus subsp. fetus (strain 82-40).